A 784-amino-acid polypeptide reads, in one-letter code: MNAESRIHALRAELDQHNYRYYVLDEPSVPDAEYDRLFNELKALEAEHPQLVTADSPTQRVGGAALAAFSQVRHEVPMLSLGNAFEEDDLRDFDRRVVEGLDLPGGDLFAAQAAVDYSCEPKLDGLAVSLLYRDGQLVQGATRGDGTTGEDISTNVRTVRNIPLKLQGEGWPAVLEVRGEVYMSKAGFDRLNAAQAEAGGKTFANPRNAAAGSLRQLDSKITASRPLEFCCYGVGQVSEPFGDSHIGILEKLKTWGLPISRELRHAAGIEECLAYYRDIGARRNDLPYEIDGVVFKVNSLASQRELGFRAREPRWAIAHKFPAMEELTEVLDVEFQVGRTGAVTPVARLKPVKVAGVMVSNATLHNMDEIARLGLRIGDTVIIRRAGDVIPQVMQVVLDRRPENARPVEVPTECPVCGSQVERTQLVKRSKGKETISEGAVYRCVGRLSCAAQLKQAIIHYVSRRAMDIDGLGEKSVEQLVDEGLIRSPADLYKLEFEQVVVLEGFAEVSSRKLLEAIEASKRPSLARFIYALGIPDVGEETAKVLARSLGSLARVQVALPQVLTYLPDIGLEVAHEIHNFFEDTHNREVIAQLLASGMQLQEEGELGAEFAASTTLAGMLAKLDIPSVGPTGAEKLVDKLGTLDKIIAADGIDLRQALNTKQAEGVREFFRDEANQLLARAIEAQLLDFGMHWSCEKRSAEGLPLAGQTWVLTGTLERMSRDVAKEQLERLGAKVAGSVSGKTHCVVAGPGAGSKLAKANELGVKVLDEEQFVAFMAEQGITL.

NAD(+)-binding positions include 31-35 (DAEYD), 80-81 (SL), and Glu120. The N6-AMP-lysine intermediate role is filled by Lys122. The NAD(+) site is built by Arg143, Glu180, Lys296, and Lys320. 4 residues coordinate Zn(2+): Cys414, Cys417, Cys444, and Cys450. A BRCT domain is found at 701–784 (AEGLPLAGQT…AFMAEQGITL (84 aa)).

It belongs to the NAD-dependent DNA ligase family. LigA subfamily. Mg(2+) is required as a cofactor. It depends on Mn(2+) as a cofactor.

It catalyses the reaction NAD(+) + (deoxyribonucleotide)n-3'-hydroxyl + 5'-phospho-(deoxyribonucleotide)m = (deoxyribonucleotide)n+m + AMP + beta-nicotinamide D-nucleotide.. In terms of biological role, DNA ligase that catalyzes the formation of phosphodiester linkages between 5'-phosphoryl and 3'-hydroxyl groups in double-stranded DNA using NAD as a coenzyme and as the energy source for the reaction. It is essential for DNA replication and repair of damaged DNA. The polypeptide is DNA ligase (Pseudomonas entomophila (strain L48)).